Consider the following 336-residue polypeptide: Phenylalanine--tRNA ligase alpha subunit (336 aa).

Glutamate 251 provides a ligand contact to Mg(2+).

The protein belongs to the class-II aminoacyl-tRNA synthetase family. Phe-tRNA synthetase alpha subunit type 1 subfamily. Tetramer of two alpha and two beta subunits. It depends on Mg(2+) as a cofactor.

It is found in the cytoplasm. It catalyses the reaction tRNA(Phe) + L-phenylalanine + ATP = L-phenylalanyl-tRNA(Phe) + AMP + diphosphate + H(+). This chain is Phenylalanine--tRNA ligase alpha subunit, found in Syntrophobacter fumaroxidans (strain DSM 10017 / MPOB).